Here is a 315-residue protein sequence, read N- to C-terminus: Methionyl-tRNA formyltransferase (315 aa).

113–116 is a (6S)-5,6,7,8-tetrahydrofolate binding site; it reads SILP.

This sequence belongs to the Fmt family.

The catalysed reaction is L-methionyl-tRNA(fMet) + (6R)-10-formyltetrahydrofolate = N-formyl-L-methionyl-tRNA(fMet) + (6S)-5,6,7,8-tetrahydrofolate + H(+). In terms of biological role, attaches a formyl group to the free amino group of methionyl-tRNA(fMet). The formyl group appears to play a dual role in the initiator identity of N-formylmethionyl-tRNA by promoting its recognition by IF2 and preventing the misappropriation of this tRNA by the elongation apparatus. The polypeptide is Methionyl-tRNA formyltransferase (Vibrio vulnificus (strain YJ016)).